The following is an 860-amino-acid chain: Transcription factor E2F8 (860 aa).

Residues 1-114 form a disordered region; that stretch reads MENQKENLFS…NEKSQPSRKE (114 aa). Ser71 carries the post-translational modification Phosphoserine. Composition is skewed to basic and acidic residues over residues 74 to 84 and 92 to 114; these read IRSRDQKRGLS and EARD…SRKE. 2 DNA-binding regions span residues 112–181 and 261–347; these read RKEK…TWHG and RKDK…KWTG. Disordered regions lie at residues 407–433 and 533–616; these read RRKI…PPVP and TPPH…PKED. Over residues 411–426 the composition is skewed to low complexity; the sequence is SSAPSSPVKSSKAESS. Residues Ser412 and Ser416 each carry the phosphoserine modification. Residues 542–554 show a composition bias toward polar residues; the sequence is VCPTQSSNATGSK. 2 stretches are compositionally biased toward basic and acidic residues: residues 555 to 565 and 586 to 596; these read DPTDAPTEKTA and RSKETTGDRGT.

It belongs to the E2F/DP family. Homodimer and heterodimer: mainly forms homodimers and, to a lesser extent, heterodimers with E2F8. Dimerization is important for DNA-binding. Interacts with HIF1A.

Its subcellular location is the nucleus. Its function is as follows. Atypical E2F transcription factor that participates in various processes such as angiogenesis and polyploidization of specialized cells. Mainly acts as a transcription repressor that binds DNA independently of DP proteins and specifically recognizes the E2 recognition site 5'-TTTC[CG]CGC-3'. Directly represses transcription of classical E2F transcription factors such as E2F1: component of a feedback loop in S phase by repressing the expression of E2F1, thereby preventing p53/TP53-dependent apoptosis. Plays a key role in polyploidization of cells in placenta and liver by regulating the endocycle, probably by repressing genes promoting cytokinesis and antagonizing action of classical E2F proteins (E2F1, E2F2 and/or E2F3). Required for placental development by promoting polyploidization of trophoblast giant cells. Acts as a promoter of sprouting angiogenesis, possibly by acting as a transcription activator: associates with HIF1A, recognizes and binds the VEGFA promoter, which is different from canonical E2 recognition site, and activates expression of the VEGFA gene. The sequence is that of Transcription factor E2F8 (E2f8) from Rattus norvegicus (Rat).